Consider the following 358-residue polypeptide: uncharacterized protein (358 aa).

Belongs to the SMP-30/CGR1 family.

This is an uncharacterized protein from Saccharomyces cerevisiae (strain ATCC 204508 / S288c) (Baker's yeast).